The primary structure comprises 383 residues: MEVLATDTVSQQERLQAIAEKRRKQAEIESKRRQLEDDRRQLQYLKSKALRERWLLEGTPSSASEGDEDMRKQMQEDEQKARSLEESITRLEKEIDVLEFGESAPAAPKENSAAPSPIRPHSTSPAKEEQKSETMVNAQQTPLGTPKENRKSTPVRSPGGSTMMKAAMYSVEITVEKDKVTGETRVLSSTTLLPRDPLPQGVKVYEDETKVVHAVDGLSENGIQPLSSSEVDELIHKADEVTLSEAGSTTGPAEPRGLAEDVTRTTPSRREITGVEAQPGEATSGPPGIQPGQEPPVTMVFMGYQNVEDEAETKKVLGLQDTIKAELVVIEDSVTPREPAPLNGSAAELPATKEENQTGPTTTPSDTQDLDMKKPRCRCCSVM.

An N-acetylmethionine modification is found at Met-1. A coiled-coil region spans residues Asp-7–Gly-101. Disordered stretches follow at residues Arg-51–Met-164, Thr-242–Gln-293, and Ser-333–Lys-374. The span at Asp-69–Asp-96 shows a compositional bias: basic and acidic residues. Phosphoserine is present on residues Ser-116, Ser-122, and Ser-124. A compositionally biased stretch (polar residues) spans Glu-133–Leu-143. 3 positions are modified to phosphothreonine: Thr-141, Thr-145, and Thr-153. Residues Ser-157 and Ser-161 each carry the phosphoserine modification. A Phosphothreonine modification is found at Thr-242. Phosphoserine is present on Ser-244. A compositionally biased stretch (basic and acidic residues) spans Gly-257 to Thr-273. Residue Ser-345 is modified to Phosphoserine. The span at Gln-357–Thr-367 shows a compositional bias: polar residues. Phosphothreonine is present on residues Thr-361, Thr-362, and Thr-363. Position 365 is a phosphoserine (Ser-365). Phosphothreonine is present on Thr-367. S-palmitoyl cysteine attachment occurs at residues Cys-377 and Cys-379. Cys-380 is modified (cysteine methyl ester). The S-farnesyl cysteine moiety is linked to residue Cys-380. A propeptide spans Ser-381–Met-383 (removed in mature form).

The protein belongs to the paralemmin family. As to quaternary structure, interacts with dopamine receptor DRD3. Expressed in neurons cells of neuropil-rich areas of the brain, in the Purkinje cells of the cerebellum, in cells of the cerebral cortex, hippocampus, brainstem nuclei and glial processes and sheaths. Expressed in the medulla of the adrenal chromaffin cells and renal duct cells (at protein level).

The protein resides in the cell membrane. It localises to the cell projection. It is found in the filopodium membrane. The protein localises to the axon. Its subcellular location is the dendrite. The protein resides in the dendritic spine. It localises to the basolateral cell membrane. It is found in the apicolateral cell membrane. Its function is as follows. Involved in plasma membrane dynamics and cell process formation. Necessary for axonal and dendritic filopodia induction, for dendritic spine maturation and synapse formation in a palmitoylation-dependent manner. This chain is Paralemmin-1 (Palm), found in Rattus norvegicus (Rat).